The primary structure comprises 171 residues: ATP synthase subunit b (171 aa).

Residues 2–22 (FLVKMVLGFLIFLSPLCATGL) form a helical membrane-spanning segment.

It belongs to the ATPase B chain family. As to quaternary structure, F-type ATPases have 2 components, F(1) - the catalytic core - and F(0) - the membrane proton channel. F(1) has five subunits: alpha(3), beta(3), gamma(1), delta(1), epsilon(1). F(0) has three main subunits: a(1), b(2) and c(10-14). The alpha and beta chains form an alternating ring which encloses part of the gamma chain. F(1) is attached to F(0) by a central stalk formed by the gamma and epsilon chains, while a peripheral stalk is formed by the delta and b chains.

It localises to the cell inner membrane. Its function is as follows. F(1)F(0) ATP synthase produces ATP from ADP in the presence of a proton or sodium gradient. F-type ATPases consist of two structural domains, F(1) containing the extramembraneous catalytic core and F(0) containing the membrane proton channel, linked together by a central stalk and a peripheral stalk. During catalysis, ATP synthesis in the catalytic domain of F(1) is coupled via a rotary mechanism of the central stalk subunits to proton translocation. Functionally, component of the F(0) channel, it forms part of the peripheral stalk, linking F(1) to F(0). This is ATP synthase subunit b from Helicobacter pylori (strain Shi470).